The chain runs to 174 residues: Ribosomal RNA large subunit methyltransferase H (174 aa).

S-adenosyl-L-methionine is bound by residues Leu-90, Gly-122, and 141-146; that span reads LGELTW.

Belongs to the RNA methyltransferase RlmH family. In terms of assembly, homodimer.

Its subcellular location is the cytoplasm. It catalyses the reaction pseudouridine(1915) in 23S rRNA + S-adenosyl-L-methionine = N(3)-methylpseudouridine(1915) in 23S rRNA + S-adenosyl-L-homocysteine + H(+). Its function is as follows. Specifically methylates the pseudouridine at position 1915 (m3Psi1915) in 23S rRNA. The sequence is that of Ribosomal RNA large subunit methyltransferase H from Brucella melitensis biotype 2 (strain ATCC 23457).